The primary structure comprises 227 residues: Cytochrome c oxidase subunit 2 (227 aa).

Topologically, residues Met1–Ser14 are mitochondrial intermembrane. The helical transmembrane segment at Pro15–Met45 threads the bilayer. At Leu46–Gln59 the chain is on the mitochondrial matrix side. Residues Glu60–Met87 traverse the membrane as a helical segment. Over Asp88–Leu227 the chain is Mitochondrial intermembrane. Positions 161, 196, 198, 200, 204, and 207 each coordinate Cu cation. Glu198 serves as a coordination point for Mg(2+). Tyr218 is subject to Phosphotyrosine.

It belongs to the cytochrome c oxidase subunit 2 family. As to quaternary structure, component of the cytochrome c oxidase (complex IV, CIV), a multisubunit enzyme composed of 14 subunits. The complex is composed of a catalytic core of 3 subunits MT-CO1, MT-CO2 and MT-CO3, encoded in the mitochondrial DNA, and 11 supernumerary subunits COX4I, COX5A, COX5B, COX6A, COX6B, COX6C, COX7A, COX7B, COX7C, COX8 and NDUFA4, which are encoded in the nuclear genome. The complex exists as a monomer or a dimer and forms supercomplexes (SCs) in the inner mitochondrial membrane with NADH-ubiquinone oxidoreductase (complex I, CI) and ubiquinol-cytochrome c oxidoreductase (cytochrome b-c1 complex, complex III, CIII), resulting in different assemblies (supercomplex SCI(1)III(2)IV(1) and megacomplex MCI(2)III(2)IV(2)). Found in a complex with TMEM177, COA6, COX18, COX20, SCO1 and SCO2. Interacts with TMEM177 in a COX20-dependent manner. Interacts with COX20. Interacts with COX16. Cu cation serves as cofactor.

The protein resides in the mitochondrion inner membrane. It carries out the reaction 4 Fe(II)-[cytochrome c] + O2 + 8 H(+)(in) = 4 Fe(III)-[cytochrome c] + 2 H2O + 4 H(+)(out). Its function is as follows. Component of the cytochrome c oxidase, the last enzyme in the mitochondrial electron transport chain which drives oxidative phosphorylation. The respiratory chain contains 3 multisubunit complexes succinate dehydrogenase (complex II, CII), ubiquinol-cytochrome c oxidoreductase (cytochrome b-c1 complex, complex III, CIII) and cytochrome c oxidase (complex IV, CIV), that cooperate to transfer electrons derived from NADH and succinate to molecular oxygen, creating an electrochemical gradient over the inner membrane that drives transmembrane transport and the ATP synthase. Cytochrome c oxidase is the component of the respiratory chain that catalyzes the reduction of oxygen to water. Electrons originating from reduced cytochrome c in the intermembrane space (IMS) are transferred via the dinuclear copper A center (CU(A)) of subunit 2 and heme A of subunit 1 to the active site in subunit 1, a binuclear center (BNC) formed by heme A3 and copper B (CU(B)). The BNC reduces molecular oxygen to 2 water molecules using 4 electrons from cytochrome c in the IMS and 4 protons from the mitochondrial matrix. This is Cytochrome c oxidase subunit 2 (MT-CO2) from Speothos venaticus (Bush dog).